A 365-amino-acid chain; its full sequence is Aminomethyltransferase (365 aa).

The protein belongs to the GcvT family. In terms of assembly, the glycine cleavage system is composed of four proteins: P, T, L and H.

It carries out the reaction N(6)-[(R)-S(8)-aminomethyldihydrolipoyl]-L-lysyl-[protein] + (6S)-5,6,7,8-tetrahydrofolate = N(6)-[(R)-dihydrolipoyl]-L-lysyl-[protein] + (6R)-5,10-methylene-5,6,7,8-tetrahydrofolate + NH4(+). Functionally, the glycine cleavage system catalyzes the degradation of glycine. The chain is Aminomethyltransferase from Chlorobium luteolum (strain DSM 273 / BCRC 81028 / 2530) (Pelodictyon luteolum).